The following is a 396-amino-acid chain: Interleukin-3 receptor subunit alpha (396 aa).

The N-terminal stretch at 1 to 16 (MAANLWLILGLLASHS) is a signal peptide. At 17 to 331 (SDLAAVREAP…VCPPEVMPVK (315 aa)) the chain is on the extracellular side. Disulfide bonds link cysteine 62–cysteine 79, cysteine 87–cysteine 223, cysteine 125–cysteine 134, cysteine 165–cysteine 187, and cysteine 245–cysteine 323. N-linked (GlcNAc...) asparagine glycosylation occurs at asparagine 91. Asparagine 213, asparagine 246, asparagine 272, and asparagine 283 each carry an N-linked (GlcNAc...) asparagine glycan. The short motif at 312-316 (LSSWS) is the WSXWS motif element. A helical transmembrane segment spans residues 332 to 355 (TALVTSVATVLGAGLVAAGLLLWW). Topologically, residues 356–396 (RKSLLYRLCPPIPRLRLPLAGEMVVWEPALEDCEVTPVTDA) are cytoplasmic. Residue lysine 357 forms a Glycyl lysine isopeptide (Lys-Gly) (interchain with G-Cter in ubiquitin) linkage. Positions 363-371 (LCPPIPRLR) match the Box 1 motif motif.

This sequence belongs to the type I cytokine receptor family. Type 5 subfamily. As to quaternary structure, interacts with IL3. Heterodimer of an alpha and a beta subunit. The beta subunit is common to the IL3, IL5 and GM-CSF receptors. Ubiquitinated at Lys-357 by RNFT2 in response to IL3. Ubiquitination leads ligand-induced degradation by the proteasome. Ubiquitinated by RNF128 via 'Lys-27'-linked polyubiquitination, facilitating its degradation through the lysosomal pathway.

Its subcellular location is the cell membrane. The protein resides in the endomembrane system. In terms of biological role, cell surface receptor for IL3 expressed on hematopoietic progenitor cells, monocytes and B-lymphocytes that controls the production and differentiation of hematopoietic progenitor cells into lineage-restricted cells. Ligand stimulation rapidly induces hetrodimerization with IL3RB, phosphorylation and enzyme activity of effector proteins such as JAK2 and PI3K that play a role in signaling cell proliferation and differentiation. Activation of JAK2 leads to STAT5-mediated transcriptional program. The protein is Interleukin-3 receptor subunit alpha (Il3ra) of Mus musculus (Mouse).